A 345-amino-acid polypeptide reads, in one-letter code: Probable dual-specificity RNA methyltransferase RlmN (345 aa).

Glutamate 90 serves as the catalytic Proton acceptor. Residues 96 to 326 (YDYGNSICIS…STIRKEMGAD (231 aa)) enclose the Radical SAM core domain. An intrachain disulfide couples cysteine 103 to cysteine 331. [4Fe-4S] cluster contacts are provided by cysteine 110, cysteine 114, and cysteine 117. S-adenosyl-L-methionine is bound by residues 157–158 (GE), serine 189, 212–214 (SLH), and asparagine 288. Catalysis depends on cysteine 331, which acts as the S-methylcysteine intermediate.

Belongs to the radical SAM superfamily. RlmN family. It depends on [4Fe-4S] cluster as a cofactor.

It is found in the cytoplasm. The enzyme catalyses adenosine(2503) in 23S rRNA + 2 reduced [2Fe-2S]-[ferredoxin] + 2 S-adenosyl-L-methionine = 2-methyladenosine(2503) in 23S rRNA + 5'-deoxyadenosine + L-methionine + 2 oxidized [2Fe-2S]-[ferredoxin] + S-adenosyl-L-homocysteine. It carries out the reaction adenosine(37) in tRNA + 2 reduced [2Fe-2S]-[ferredoxin] + 2 S-adenosyl-L-methionine = 2-methyladenosine(37) in tRNA + 5'-deoxyadenosine + L-methionine + 2 oxidized [2Fe-2S]-[ferredoxin] + S-adenosyl-L-homocysteine. Its function is as follows. Specifically methylates position 2 of adenine 2503 in 23S rRNA and position 2 of adenine 37 in tRNAs. The sequence is that of Probable dual-specificity RNA methyltransferase RlmN from Clostridium acetobutylicum (strain ATCC 824 / DSM 792 / JCM 1419 / IAM 19013 / LMG 5710 / NBRC 13948 / NRRL B-527 / VKM B-1787 / 2291 / W).